The sequence spans 433 residues: Pyroglutamylated RF-amide peptide receptor (433 aa).

The Extracellular segment spans residues Met-1–Val-46. 2 N-linked (GlcNAc...) asparagine glycosylation sites follow: Asn-5 and Asn-19. The chain crosses the membrane as a helical span at residues Ala-47 to Ile-67. The Cytoplasmic portion of the chain corresponds to Tyr-68–Asn-81. Residues Ile-82 to Thr-102 form a helical membrane-spanning segment. At Met-103–Met-120 the chain is on the extracellular side. The helical transmembrane segment at Val-121–Val-141 threads the bilayer. The Cytoplasmic portion of the chain corresponds to Glu-142–Ala-162. A helical transmembrane segment spans residues Phe-163 to Val-183. Over Gln-184–Arg-212 the chain is Extracellular. Residues Ile-213–Leu-233 traverse the membrane as a helical segment. Over Tyr-234 to Ala-271 the chain is Cytoplasmic. Residues Val-272 to Val-292 form a helical membrane-spanning segment. The Extracellular portion of the chain corresponds to His-293–Val-313. A helical membrane pass occupies residues Phe-314 to Phe-334. Over Met-335–Leu-433 the chain is Cytoplasmic. Residues Ser-356–Asp-389 are disordered.

It belongs to the G-protein coupled receptor 1 family. Highly expressed in the adrenal gland and at moderate levels in the eye and testis. Expressed widely in the brain with high levels in the hypothalamus and moderate levels in the amygdala, basal forebrain, cortex, medulla oblongata, midbrain and thalamus.

It localises to the cell membrane. Receptor for the orexigenic neuropeptide QRFP. The activity of this receptor is mediated by G proteins that modulate adenylate cyclase activity and intracellular calcium levels. The chain is Pyroglutamylated RF-amide peptide receptor (Qrfpr) from Rattus norvegicus (Rat).